Consider the following 1399-residue polypeptide: DNA-directed RNA polymerase subunit beta' (1399 aa).

4 residues coordinate Zn(2+): cysteine 70, cysteine 72, cysteine 85, and cysteine 88. 3 residues coordinate Mg(2+): aspartate 460, aspartate 462, and aspartate 464. Cysteine 814, cysteine 888, cysteine 895, and cysteine 898 together coordinate Zn(2+).

The protein belongs to the RNA polymerase beta' chain family. In terms of assembly, the RNAP catalytic core consists of 2 alpha, 1 beta, 1 beta' and 1 omega subunit. When a sigma factor is associated with the core the holoenzyme is formed, which can initiate transcription. Mg(2+) is required as a cofactor. It depends on Zn(2+) as a cofactor.

It carries out the reaction RNA(n) + a ribonucleoside 5'-triphosphate = RNA(n+1) + diphosphate. In terms of biological role, DNA-dependent RNA polymerase catalyzes the transcription of DNA into RNA using the four ribonucleoside triphosphates as substrates. The chain is DNA-directed RNA polymerase subunit beta' from Pseudomonas syringae pv. syringae (strain B728a).